A 228-amino-acid chain; its full sequence is Small ribosomal subunit protein uS2 (228 aa).

Belongs to the universal ribosomal protein uS2 family.

This Blochmanniella pennsylvanica (strain BPEN) protein is Small ribosomal subunit protein uS2.